A 403-amino-acid polypeptide reads, in one-letter code: S-adenosylmethionine synthase (403 aa).

Residue histidine 15 coordinates ATP. Aspartate 17 serves as a coordination point for Mg(2+). K(+) is bound at residue glutamate 43. L-methionine is bound by residues glutamate 56 and glutamine 99. Residues 99–109 (QSPDINQGVDR) are flexible loop. ATP is bound by residues 166 to 168 (DAK), 232 to 233 (KF), aspartate 241, 247 to 248 (RK), alanine 264, and lysine 268. Aspartate 241 provides a ligand contact to L-methionine. L-methionine is bound at residue lysine 272.

It belongs to the AdoMet synthase family. In terms of assembly, homotetramer; dimer of dimers. It depends on Mg(2+) as a cofactor. The cofactor is K(+).

It localises to the cytoplasm. It carries out the reaction L-methionine + ATP + H2O = S-adenosyl-L-methionine + phosphate + diphosphate. The protein operates within amino-acid biosynthesis; S-adenosyl-L-methionine biosynthesis; S-adenosyl-L-methionine from L-methionine: step 1/1. In terms of biological role, catalyzes the formation of S-adenosylmethionine (AdoMet) from methionine and ATP. The overall synthetic reaction is composed of two sequential steps, AdoMet formation and the subsequent tripolyphosphate hydrolysis which occurs prior to release of AdoMet from the enzyme. The chain is S-adenosylmethionine synthase from Xanthomonas campestris pv. campestris (strain ATCC 33913 / DSM 3586 / NCPPB 528 / LMG 568 / P 25).